Here is a 434-residue protein sequence, read N- to C-terminus: Perilipin-3 (434 aa).

The segment at 1 to 22 is disordered; it reads MSADGAEADGSTQVTVEEPVQQ. Residue serine 2 is modified to N-acetylserine. Serine 31 bears the Phosphoserine mark. At lysine 65 the chain carries N6-acetyllysine. Serine 91 is subject to Phosphoserine. Residue lysine 122 forms a Glycyl lysine isopeptide (Lys-Gly) (interchain with G-Cter in SUMO1) linkage. Phosphoserine occurs at positions 130 and 148. The residue at position 170 (threonine 170) is a Phosphothreonine. Serine 175 and serine 179 each carry phosphoserine. The residue at position 216 (threonine 216) is a Phosphothreonine. 2 positions are modified to phosphoserine: serine 217 and serine 241. Position 251 is a phosphotyrosine (tyrosine 251). Coiled-coil stretches lie at residues 252 to 280 and 353 to 377; these read EHSL…SLME and TNVK…SSIH.

Belongs to the perilipin family. Homooligomer. Interacts with M6PR (via the cytoplasmic domain). Interacts with IGF2R (via the cytoplasmic domain). Phosphorylation at Tyr-251 by isoform 1 of CHKA (CHKalpha2) promotes dissociation from lipid droplets: dissociation is followed by recruitment of autophagosome machinery to lipid droplets and subsequent lipid droplet lipolysis.

Its subcellular location is the lipid droplet. It is found in the endosome membrane. It localises to the cytoplasm. In terms of biological role, structural component of lipid droplets, which is required for the formation and maintenance of lipid storage droplets. Required for the transport of mannose 6-phosphate receptors (MPR) from endosomes to the trans-Golgi network. This Pongo abelii (Sumatran orangutan) protein is Perilipin-3 (PLIN3).